A 71-amino-acid polypeptide reads, in one-letter code: General transcription and DNA repair factor IIH subunit TFB5 (71 aa).

This sequence belongs to the TFB5 family. As to quaternary structure, component of the 7-subunit TFIIH core complex.

The protein resides in the nucleus. It is found in the chromosome. Component of the general transcription and DNA repair factor IIH (TFIIH) core complex, which is involved in general and transcription-coupled nucleotide excision repair (NER) of damaged DNA and in RNA transcription by RNA polymerase II. In NER, TFIIH acts by opening DNA around the lesion to allow the excision of the damaged oligonucleotide and its replacement by a new DNA fragment. In transcription, TFIIH has an essential role in transcription initiation. When the pre-initiation complex (PIC) has been established, TFIIH is required for promoter opening and promoter escape. Necessary for the stability of the TFIIH complex and for the presence of normal levels of TFIIH in the cell. Required for efficient binding of TFIIH to damaged DNA. Dispensable for normal development, but required when transcription is challenged. This is General transcription and DNA repair factor IIH subunit TFB5 from Caenorhabditis elegans.